A 172-amino-acid polypeptide reads, in one-letter code: LOB domain-containing protein 4 (172 aa).

Residues 12 to 113 (SPCAACKLLR…AQLALAQAEV (102 aa)) form the LOB domain. The tract at residues 125-152 (PGHGLCPDSPSSSGSPSSKQVSPQDNKG) is disordered. Low complexity predominate over residues 131 to 147 (PDSPSSSGSPSSKQVSP).

The protein belongs to the LOB domain-containing protein family. In terms of tissue distribution, expressed in young shoots, roots, stems, leaves and flowers.

In Arabidopsis thaliana (Mouse-ear cress), this protein is LOB domain-containing protein 4 (LBD4).